The primary structure comprises 151 residues: Regulatory protein RecX (151 aa).

Belongs to the RecX family.

It localises to the cytoplasm. Modulates RecA activity. The sequence is that of Regulatory protein RecX from Haemophilus ducreyi (strain 35000HP / ATCC 700724).